The sequence spans 478 residues: Histidine--tRNA ligase (478 aa).

This sequence belongs to the class-II aminoacyl-tRNA synthetase family. Homodimer.

It is found in the cytoplasm. The catalysed reaction is tRNA(His) + L-histidine + ATP = L-histidyl-tRNA(His) + AMP + diphosphate + H(+). This chain is Histidine--tRNA ligase (hisS), found in Xanthomonas axonopodis pv. citri (strain 306).